The following is a 316-amino-acid chain: Methionyl-tRNA formyltransferase (316 aa).

Ser111–Pro114 is a (6S)-5,6,7,8-tetrahydrofolate binding site.

The protein belongs to the Fmt family.

It carries out the reaction L-methionyl-tRNA(fMet) + (6R)-10-formyltetrahydrofolate = N-formyl-L-methionyl-tRNA(fMet) + (6S)-5,6,7,8-tetrahydrofolate + H(+). In terms of biological role, attaches a formyl group to the free amino group of methionyl-tRNA(fMet). The formyl group appears to play a dual role in the initiator identity of N-formylmethionyl-tRNA by promoting its recognition by IF2 and preventing the misappropriation of this tRNA by the elongation apparatus. The sequence is that of Methionyl-tRNA formyltransferase from Limosilactobacillus fermentum (strain NBRC 3956 / LMG 18251) (Lactobacillus fermentum).